Reading from the N-terminus, the 259-residue chain is Proteasome subunit alpha (259 aa).

The segment at 222–259 is disordered; it reads RITGPALEQLIPAEPAPASEPAPESKPDTETKPADPQD. Positions 244–259 are enriched in basic and acidic residues; it reads PESKPDTETKPADPQD.

This sequence belongs to the peptidase T1A family. As to quaternary structure, the 20S proteasome core is composed of 14 alpha and 14 beta subunits that assemble into four stacked heptameric rings, resulting in a barrel-shaped structure. The two inner rings, each composed of seven catalytic beta subunits, are sandwiched by two outer rings, each composed of seven alpha subunits. The catalytic chamber with the active sites is on the inside of the barrel. Has a gated structure, the ends of the cylinder being occluded by the N-termini of the alpha-subunits. Is capped by the proteasome-associated ATPase, ARC.

It is found in the cytoplasm. The protein operates within protein degradation; proteasomal Pup-dependent pathway. With respect to regulation, the formation of the proteasomal ATPase ARC-20S proteasome complex, likely via the docking of the C-termini of ARC into the intersubunit pockets in the alpha-rings, may trigger opening of the gate for substrate entry. Interconversion between the open-gate and close-gate conformations leads to a dynamic regulation of the 20S proteasome proteolysis activity. Component of the proteasome core, a large protease complex with broad specificity involved in protein degradation. This is Proteasome subunit alpha from Rhodococcus jostii (strain RHA1).